Reading from the N-terminus, the 93-residue chain is Small ribosomal subunit protein bS20 (93 aa).

The segment at 72-93 is disordered; the sequence is KNTASRKKSRLTRKFNSVYKAS. The span at 74–84 shows a compositional bias: basic residues; that stretch reads TASRKKSRLTR.

It belongs to the bacterial ribosomal protein bS20 family.

Functionally, binds directly to 16S ribosomal RNA. The sequence is that of Small ribosomal subunit protein bS20 from Carboxydothermus hydrogenoformans (strain ATCC BAA-161 / DSM 6008 / Z-2901).